Consider the following 841-residue polypeptide: Rho guanine nucleotide exchange factor 15 (841 aa).

Disordered regions lie at residues 1-179 (MSAQ…QARA), 239-261 (RRAS…HPAV), and 279-333 (KPPK…REEE). The span at 39–53 (NGSSPQELPRNSNDA) shows a compositional bias: polar residues. Positions 65 to 110 (PPAASLKPPALLPPSASRASLDSQTSPDSPSSTPTPSPVSRRSASP) are enriched in low complexity. 2 positions are modified to phosphoserine: Ser-107 and Ser-109. The span at 111–124 (EPAPRSPVPPPKPS) shows a compositional bias: pro residues. Residue Tyr-353 is modified to Phosphotyrosine; by EPHB2. Residues 417–601 (RMQESLFEVV…SKIIERCSAE (185 aa)) form the DH domain. The segment at 765–793 (ESSAPAKTEGRSLESRAAPKHLHKTPEGW) is disordered.

As to quaternary structure, interacts with EPHB2. Interacts with EPHA4. Phosphorylated on tyrosine residues upon EFNA1 stimulation. EPHB2-dependent phosphorylation at Tyr-353 triggers UBE3A-mediated ubiquitination. In terms of processing, ubiquitinated; UBE3A-mediated ubiquitination and degradation by the proteasome promotes EFNB1-dependent synapse formation. As to expression, expressed in the vascular smooth muscle of coronary artery.

The protein localises to the cell projection. Its subcellular location is the dendrite. Functionally, specific GEF for RhoA activation. Does not activate RAC1 or CDC42. Regulates vascular smooth muscle contractility. Negatively regulates excitatory synapse development by suppressing the synapse-promoting activity of EPHB2. This is Rho guanine nucleotide exchange factor 15 (ARHGEF15) from Homo sapiens (Human).